A 142-amino-acid chain; its full sequence is Large ribosomal subunit protein uL13 (142 aa).

This sequence belongs to the universal ribosomal protein uL13 family. In terms of assembly, part of the 50S ribosomal subunit.

Its function is as follows. This protein is one of the early assembly proteins of the 50S ribosomal subunit, although it is not seen to bind rRNA by itself. It is important during the early stages of 50S assembly. This Pectobacterium atrosepticum (strain SCRI 1043 / ATCC BAA-672) (Erwinia carotovora subsp. atroseptica) protein is Large ribosomal subunit protein uL13.